Reading from the N-terminus, the 355-residue chain is Uroporphyrinogen decarboxylase (355 aa).

Substrate is bound by residues 27-31 (RQAGR), Asp-77, Tyr-154, Thr-209, and His-328.

This sequence belongs to the uroporphyrinogen decarboxylase family. Homodimer.

The protein localises to the cytoplasm. The enzyme catalyses uroporphyrinogen III + 4 H(+) = coproporphyrinogen III + 4 CO2. It functions in the pathway porphyrin-containing compound metabolism; protoporphyrin-IX biosynthesis; coproporphyrinogen-III from 5-aminolevulinate: step 4/4. Catalyzes the decarboxylation of four acetate groups of uroporphyrinogen-III to yield coproporphyrinogen-III. This chain is Uroporphyrinogen decarboxylase, found in Photobacterium profundum (strain SS9).